The following is a 368-amino-acid chain: MSAFQPTIKRRESTKIYVGNVPIGGDAPIAVQSMTNTRTTDVEATVAQIKSLERVGADIVRVSVPTMDAAEAFKQIKQQVNVPLVADIHFDYRIALKVAEYGVDCLRINPGNIGREDRVRAVVDCARDKNIPIRIGVNAGSLEKDLQEKYGEPTPEALLESALRHVEILDRLNFDQFKVSVKASDVFLAVESYRLLAKAIKQPLHLGITEAGGARAGAVKSAVGLGMLLAEGIGDTLRVSLAADPVEEIKVGFDILKSLRIRSRGINFIACPTCSRQEFDVIGTVNALEQRLEDIITPMDVSIIGCVVNGPGEALVSDLGVTGGNKKSGYYLDGERQKERFDNEDIVNQLEAKIRAKVARQDPKNRII.

Residues cysteine 271, cysteine 274, cysteine 306, and glutamate 313 each coordinate [4Fe-4S] cluster.

Belongs to the IspG family. Requires [4Fe-4S] cluster as cofactor.

It catalyses the reaction (2E)-4-hydroxy-3-methylbut-2-enyl diphosphate + oxidized [flavodoxin] + H2O + 2 H(+) = 2-C-methyl-D-erythritol 2,4-cyclic diphosphate + reduced [flavodoxin]. It functions in the pathway isoprenoid biosynthesis; isopentenyl diphosphate biosynthesis via DXP pathway; isopentenyl diphosphate from 1-deoxy-D-xylulose 5-phosphate: step 5/6. Converts 2C-methyl-D-erythritol 2,4-cyclodiphosphate (ME-2,4cPP) into 1-hydroxy-2-methyl-2-(E)-butenyl 4-diphosphate. The protein is 4-hydroxy-3-methylbut-2-en-1-yl diphosphate synthase (flavodoxin) of Haemophilus influenzae (strain ATCC 51907 / DSM 11121 / KW20 / Rd).